Reading from the N-terminus, the 526-residue chain is 4-alpha-glucanotransferase (526 aa).

It belongs to the disproportionating enzyme family.

It is found in the cytoplasm. The catalysed reaction is Transfers a segment of a (1-&gt;4)-alpha-D-glucan to a new position in an acceptor, which may be glucose or a (1-&gt;4)-alpha-D-glucan.. The chain is 4-alpha-glucanotransferase (malQ) from Chlamydia pneumoniae (Chlamydophila pneumoniae).